The sequence spans 37 residues: Large ribosomal subunit protein bL36 (37 aa).

The protein belongs to the bacterial ribosomal protein bL36 family.

The polypeptide is Large ribosomal subunit protein bL36 (Acetivibrio thermocellus (strain ATCC 27405 / DSM 1237 / JCM 9322 / NBRC 103400 / NCIMB 10682 / NRRL B-4536 / VPI 7372) (Clostridium thermocellum)).